The following is a 102-amino-acid chain: Glutaredoxin 1 (102 aa).

One can recognise a Glutaredoxin domain in the interval M1 to K96. Residues C17 and C20 are joined by a disulfide bond.

The protein belongs to the glutaredoxin family. In terms of assembly, monomer.

The protein resides in the cytoplasm. Its function is as follows. Has a glutathione-disulfide oxidoreductase activity in the presence of NADPH and glutathione reductase. Reduces low molecular weight disulfides and proteins. This Rickettsia felis (strain ATCC VR-1525 / URRWXCal2) (Rickettsia azadi) protein is Glutaredoxin 1 (grxC1).